The primary structure comprises 278 residues: 4-hydroxy-tetrahydrodipicolinate reductase (278 aa).

NAD(+) is bound by residues Gly13–Met18 and Gly111–Thr113. His167 acts as the Proton donor/acceptor in catalysis. His168 contacts (S)-2,3,4,5-tetrahydrodipicolinate. The Proton donor role is filled by Lys171. Residue Gly177 to Thr178 coordinates (S)-2,3,4,5-tetrahydrodipicolinate.

This sequence belongs to the DapB family.

It is found in the cytoplasm. The catalysed reaction is (S)-2,3,4,5-tetrahydrodipicolinate + NAD(+) + H2O = (2S,4S)-4-hydroxy-2,3,4,5-tetrahydrodipicolinate + NADH + H(+). It carries out the reaction (S)-2,3,4,5-tetrahydrodipicolinate + NADP(+) + H2O = (2S,4S)-4-hydroxy-2,3,4,5-tetrahydrodipicolinate + NADPH + H(+). It functions in the pathway amino-acid biosynthesis; L-lysine biosynthesis via DAP pathway; (S)-tetrahydrodipicolinate from L-aspartate: step 4/4. Its function is as follows. Catalyzes the conversion of 4-hydroxy-tetrahydrodipicolinate (HTPA) to tetrahydrodipicolinate. The chain is 4-hydroxy-tetrahydrodipicolinate reductase from Nostoc punctiforme (strain ATCC 29133 / PCC 73102).